Here is a 338-residue protein sequence, read N- to C-terminus: Cytoskeleton protein RodZ (338 aa).

Residues 1-111 lie on the Cytoplasmic side of the membrane; it reads MNTEATHDQN…LGKRRKKRDG (111 aa). Residues 19 to 71 enclose the HTH cro/C1-type domain; it reads LRNAREQLGLSQQAVAERLCLKVSTVRDIEEDKAPADLASTFLRGYIRSYARL. Positions 30 to 49 form a DNA-binding region, H-T-H motif; the sequence is QQAVAERLCLKVSTVRDIEE. The helical; Signal-anchor for type II membrane protein transmembrane segment at 112-132 threads the bilayer; sequence WLMTFTWLVLFVVIGLSGAWW. Residues 133–338 are Periplasmic-facing; sequence WQDHKAQQEE…TLNAEQSPAQ (206 aa). A compositionally biased stretch (polar residues) spans 155 to 169; the sequence is NANGTNSQSIPLENS. A disordered region spans residues 155 to 240; the sequence is NANGTNSQSI…TTPDTATPLP (86 aa). Low complexity predominate over residues 170–188; sequence TTTVPEATPAPAAPVDTTA. Residues 203–217 show a composition bias toward polar residues; it reads EPQQNAVVPPSQANV. Residues 218–240 are compositionally biased toward low complexity; the sequence is DTATTAPAAPATTTTPDTATPLP.

Belongs to the RodZ family.

The protein localises to the cell inner membrane. Its function is as follows. Cytoskeletal protein that is involved in cell-shape control through regulation of the length of the long axis. This is Cytoskeleton protein RodZ from Escherichia fergusonii (strain ATCC 35469 / DSM 13698 / CCUG 18766 / IAM 14443 / JCM 21226 / LMG 7866 / NBRC 102419 / NCTC 12128 / CDC 0568-73).